The following is a 435-amino-acid chain: Minor fimbrial subunit HifE (435 aa).

Positions 1–31 (MKTLTTYAKYFTPISKIAFLFCFLMGNIAEA) are cleaved as a signal peptide.

This sequence belongs to the fimbrial protein family.

The protein localises to the fimbrium. Its function is as follows. May be a minor structural protein required for pilus biogenesis. May be the adhesive component in the pili. This is Minor fimbrial subunit HifE (hifE) from Haemophilus influenzae.